Reading from the N-terminus, the 655-residue chain is p-hydroxybenzoic acid efflux pump subunit AaeB (655 aa).

Helical transmembrane passes span 13–33 (FAVK…HFQL), 38–58 (WAVL…GGEP), 67–89 (GFLR…IAMI), 93–112 (LLMI…ISSL), 121–141 (WGLA…EPLL), 152–172 (EIVI…PRSI), 370–390 (LFWL…IAVV), 407–427 (FIYG…VIIP), 431–451 (QSML…GIEV), 459–479 (MGAL…TFHF), and 482–502 (FLDS…VILL).

It belongs to the aromatic acid exporter ArAE (TC 2.A.85) family.

It is found in the cell inner membrane. Its function is as follows. Forms an efflux pump with AaeA. Could function as a metabolic relief valve, allowing to eliminate certain compounds when they accumulate to high levels in the cell. This is p-hydroxybenzoic acid efflux pump subunit AaeB from Escherichia coli O9:H4 (strain HS).